The primary structure comprises 86 residues: Small ribosomal subunit protein bS16 (86 aa).

It belongs to the bacterial ribosomal protein bS16 family.

The sequence is that of Small ribosomal subunit protein bS16 from Bordetella petrii (strain ATCC BAA-461 / DSM 12804 / CCUG 43448).